Reading from the N-terminus, the 882-residue chain is Holliday junction resolvase MOC1, chloroplastic (882 aa).

Disordered regions lie at residues 87 to 148 and 323 to 351; these read IRDG…QTPT and TPAAASQTPPTTVTSCGTGSGAPATPRAA. The segment covering 91–111 has biased composition (polar residues); it reads PNSNSRCSTVRTHATRSKSTG. The span at 112 to 125 shows a compositional bias: low complexity; the sequence is PSRATSSGPATAAP. Polar residues predominate over residues 134–148; it reads NDTQDGGLTSEQTPT. Residues 323–337 are compositionally biased toward low complexity; that stretch reads TPAAASQTPPTTVTS. Positions 397, 552, 629, and 634 each coordinate Mg(2+). Residues 710 to 882 form a disordered region; the sequence is KVERKAQARS…DGGVSGSESE (173 aa). Over residues 732-743 the composition is skewed to acidic residues; the sequence is EEPEAQAEEEQA. Composition is skewed to low complexity over residues 744 to 758, 769 to 783, 810 to 819, and 830 to 844; these read EAGTGVVAAAAGAAA, VESGSEAAVAEVAAG, SGKSSSKAEA, and ASVGSSSVGSSSVGS. Composition is skewed to gly residues over residues 845-857 and 868-882; these read SSGGGGGGGGGVK and AKAGSDGGVSGSESE.

It depends on Mg(2+) as a cofactor. Requires Mn(2+) as cofactor.

It localises to the plastid. The protein resides in the chloroplast. The enzyme catalyses Endonucleolytic cleavage at a junction such as a reciprocal single-stranded crossover between two homologous DNA duplexes (Holliday junction).. A structure-specific endonuclease that resolves Holliday junction (HJ) intermediates during genetic recombination. Cleaves 4-way DNA junctions introducing paired nicks in opposing strands, leaving a 5'-terminal phosphate and a 3'-terminal hydroxyl group that are ligated to produce recombinant products. Mediates chloroplast nucleoid segregation during chloroplast division. This chain is Holliday junction resolvase MOC1, chloroplastic, found in Chlamydomonas reinhardtii (Chlamydomonas smithii).